Consider the following 325-residue polypeptide: Siroheme decarboxylase NirDL subunit (325 aa).

The protein belongs to the Ahb/Nir family. As to quaternary structure, forms a complex composed of NirDL, NirG and NirH. All proteins are required for the total conversion of siroheme to didecarboxysiroheme.

It catalyses the reaction siroheme + 2 H(+) = 12,18-didecarboxysiroheme + 2 CO2. Its pathway is porphyrin-containing compound metabolism. In terms of biological role, involved in heme d1 biosynthesis. Catalyzes the decarboxylation of siroheme into didecarboxysiroheme. In Paracoccus denitrificans (strain Pd 1222), this protein is Siroheme decarboxylase NirDL subunit.